Consider the following 213-residue polypeptide: ATP synthase peripheral stalk subunit OSCP, mitochondrial (213 aa).

Residues 1–23 (MATPAVSGLSRQVRCFSTSVVRP) constitute a mitochondrion transit peptide. The SIFI-degron signature appears at 5–23 (AVSGLSRQVRCFSTSVVRP). N6-acetyllysine occurs at positions 54, 60, 70, and 73. Lys90 carries the N6-succinyllysine modification. An N6-acetyllysine; alternate mark is found at Lys158 and Lys162. Residues Lys158 and Lys162 each carry the N6-succinyllysine; alternate modification. N6-acetyllysine occurs at positions 172, 176, and 192. An N6-succinyllysine modification is found at Lys199.

The protein belongs to the ATPase delta chain family. As to quaternary structure, component of the ATP synthase complex composed at least of ATP5F1A/subunit alpha, ATP5F1B/subunit beta, ATP5MC1/subunit c (homooctomer), MT-ATP6/subunit a, MT-ATP8/subunit 8, ATP5ME/subunit e, ATP5MF/subunit f, ATP5MG/subunit g, ATP5MK/subunit k, ATP5MJ/subunit j, ATP5F1C/subunit gamma, ATP5F1D/subunit delta, ATP5F1E/subunit epsilon, ATP5PF/subunit F6, ATP5PB/subunit b, ATP5PD/subunit d, ATP5PO/subunit OSCP. ATP synthase complex consists of a soluble F(1) head domain (subunits alpha(3) and beta(3)) - the catalytic core - and a membrane F(0) domain - the membrane proton channel (subunits c, a, 8, e, f, g, k and j). These two domains are linked by a central stalk (subunits gamma, delta, and epsilon) rotating inside the F1 region and a stationary peripheral stalk (subunits F6, b, d, and OSCP). Post-translationally, acetylation at Lys-162 decreases ATP production. Deacetylated by SIRT3. In terms of processing, in response to mitochondrial stress, the precursor protein is ubiquitinated by the SIFI complex in the cytoplasm before mitochondrial import, leading to its degradation. Within the SIFI complex, UBR4 initiates ubiquitin chain that are further elongated or branched by KCMF1.

Its subcellular location is the mitochondrion. It localises to the mitochondrion inner membrane. Functionally, subunit OSCP, of the mitochondrial membrane ATP synthase complex (F(1)F(0) ATP synthase or Complex V) that produces ATP from ADP in the presence of a proton gradient across the membrane which is generated by electron transport complexes of the respiratory chain. ATP synthase complex consist of a soluble F(1) head domain - the catalytic core - and a membrane F(1) domain - the membrane proton channel. These two domains are linked by a central stalk rotating inside the F(1) region and a stationary peripheral stalk. During catalysis, ATP synthesis in the catalytic domain of F(1) is coupled via a rotary mechanism of the central stalk subunits to proton translocation. In vivo, can only synthesize ATP although its ATP hydrolase activity can be activated artificially in vitro. Part of the complex F(0) domain. Part of the complex F(0) domain and the peripheric stalk, which acts as a stator to hold the catalytic alpha(3)beta(3) subcomplex and subunit a/ATP6 static relative to the rotary elements. This chain is ATP synthase peripheral stalk subunit OSCP, mitochondrial, found in Pongo abelii (Sumatran orangutan).